The primary structure comprises 2390 residues: Spectrin beta chain, non-erythrocytic 2 (2390 aa).

At Ser2 the chain carries N-acetylserine. The interval 2-278 is actin-binding; that stretch reads SSTLSPTDFD…IITYVATYYH (277 aa). A phosphoserine mark is found at Ser6 and Ser31. 2 Calponin-homology (CH) domains span residues 57–161 and 176–281; these read AVQK…LRFQ and KSAK…HYFS. 6 Spectrin repeats span residues 306-414, 427-527, 532-639, 642-744, 749-849, and 855-954; these read LVEK…LALR, AARF…RERL, ELQK…RLEE, RLWR…QRLA, LYQF…RALE, and YTML…KAAL. Residue Ser959 is modified to Phosphoserine. Spectrin repeat units follow at residues 960–1063, 1066–1169, 1174–1262, 1279–1379, 1384–1485, 1489–1586, 1589–1692, 1696–1797, 1801–1904, 1910–2010, and 2017–2076; these read IQNY…SLGE, RLQD…GRLA, FQGF…RHKK, EQQH…ARSL, RAEL…RRLQ, EQHQ…RLED, RAQQ…RLQE, LCQL…GQVL, YELQ…QLLL, FRFF…DWLQ, and VFGR…EKLT. At Ser1073 the chain carries Phosphoserine. Residues 2081–2096 are compositionally biased toward basic and acidic residues; that stretch reads REKERKRKREEEERRK. Disordered regions lie at residues 2081–2222 and 2331–2390; these read REKE…EQME and SSAS…KKNK. Positions 2116 to 2125 are enriched in polar residues; sequence QTASDTTWDG. 2 positions are modified to phosphoserine: Ser2171 and Ser2199. One can recognise a PH domain in the interval 2218-2328; the sequence is QEQMEGMLCR…WLRVVNAAIA (111 aa). Phosphothreonine is present on Thr2354. Ser2359 is modified (phosphoserine). Residues 2370-2383 show a composition bias toward basic and acidic residues; the sequence is RSKDGREREREKRF.

Belongs to the spectrin family. As to expression, highly expressed in brain, kidney, pancreas, and liver, and at lower levels in lung and placenta.

It localises to the cytoplasm. Its subcellular location is the cytoskeleton. The protein resides in the cell cortex. Its function is as follows. Probably plays an important role in neuronal membrane skeleton. The chain is Spectrin beta chain, non-erythrocytic 2 (SPTBN2) from Homo sapiens (Human).